We begin with the raw amino-acid sequence, 221 residues long: GTP-binding nuclear protein Ran-1 (221 aa).

A Small GTPase Ran-type domain is found at 10–174 (DYPSFKLVIV…LYLARKLAGD (165 aa)). 21–28 (DGGTGKTT) is a binding site for GTP. The segment at 40–48 (KKYEPTIGV) is switch-I. Residues glycine 71, 125–128 (NKVD), and 153–155 (SAK) each bind GTP. Residues 71–87 (GQEKFGGLRDGYYIHGQ) form a switch-II region.

The protein belongs to the small GTPase superfamily. Ran family. As to quaternary structure, found in a nuclear export complex with RanGTP, exportin and pre-miRNA.

The protein resides in the nucleus. Its function is as follows. GTP-binding protein involved in nucleocytoplasmic transport. Required for the import of protein into the nucleus and also for RNA export. Involved in chromatin condensation and control of cell cycle. In Oryza sativa subsp. indica (Rice), this protein is GTP-binding nuclear protein Ran-1 (RAN1).